Reading from the N-terminus, the 542-residue chain is DM7 family protein GG17591 (542 aa).

Residues 415–430 (GETQEMDEAHPTKEES) are compositionally biased toward basic and acidic residues. The tract at residues 415–443 (GETQEMDEAHPTKEESKSEEEGEVQSGSQ) is disordered.

Belongs to the DM7 family.

In Drosophila erecta (Fruit fly), this protein is DM7 family protein GG17591.